We begin with the raw amino-acid sequence, 1212 residues long: DNA-directed RNA polymerase subunit beta (1212 aa).

A compositionally biased stretch (basic and acidic residues) spans 1176–1195 (QQEKKKLAEEAAKKDDKSAE). Residues 1176–1212 (QQEKKKLAEEAAKKDDKSAEPVDQSDSSTSSDDKVSK) are disordered.

This sequence belongs to the RNA polymerase beta chain family. The RNAP catalytic core consists of 2 alpha, 1 beta, 1 beta' and 1 omega subunit. When a sigma factor is associated with the core the holoenzyme is formed, which can initiate transcription.

The enzyme catalyses RNA(n) + a ribonucleoside 5'-triphosphate = RNA(n+1) + diphosphate. In terms of biological role, DNA-dependent RNA polymerase catalyzes the transcription of DNA into RNA using the four ribonucleoside triphosphates as substrates. The chain is DNA-directed RNA polymerase subunit beta from Lactobacillus gasseri (strain ATCC 33323 / DSM 20243 / BCRC 14619 / CIP 102991 / JCM 1131 / KCTC 3163 / NCIMB 11718 / NCTC 13722 / AM63).